A 451-amino-acid polypeptide reads, in one-letter code: Bifunctional protein GlmU (451 aa).

The tract at residues 1-230 is pyrophosphorylase; that stretch reads MNNPIAAIVL…PADVGGINSR (230 aa). UDP-N-acetyl-alpha-D-glucosamine is bound by residues 10–13, Lys24, Gln74, 79–80, 102–104, Gly142, Glu156, Asn171, and Asn228; these read LAAG, GT, and YGD. Asp104 contributes to the Mg(2+) binding site. Asn228 is a Mg(2+) binding site. The tract at residues 231-251 is linker; that stretch reads AELAAAEAQWQAFRREEAMAA. The N-acetyltransferase stretch occupies residues 252–451; that stretch reads GASLRAPETV…RKKKAAEQKK (200 aa). UDP-N-acetyl-alpha-D-glucosamine contacts are provided by Arg317 and Lys335. Catalysis depends on His347, which acts as the Proton acceptor. Residues Tyr350 and Asn361 each contribute to the UDP-N-acetyl-alpha-D-glucosamine site. Acetyl-CoA-binding positions include Ala364, 370 to 371, Ser389, Ala407, and Arg424; that span reads NY.

In the N-terminal section; belongs to the N-acetylglucosamine-1-phosphate uridyltransferase family. This sequence in the C-terminal section; belongs to the transferase hexapeptide repeat family. Homotrimer. Mg(2+) serves as cofactor.

The protein localises to the cytoplasm. It catalyses the reaction alpha-D-glucosamine 1-phosphate + acetyl-CoA = N-acetyl-alpha-D-glucosamine 1-phosphate + CoA + H(+). The catalysed reaction is N-acetyl-alpha-D-glucosamine 1-phosphate + UTP + H(+) = UDP-N-acetyl-alpha-D-glucosamine + diphosphate. It functions in the pathway nucleotide-sugar biosynthesis; UDP-N-acetyl-alpha-D-glucosamine biosynthesis; N-acetyl-alpha-D-glucosamine 1-phosphate from alpha-D-glucosamine 6-phosphate (route II): step 2/2. The protein operates within nucleotide-sugar biosynthesis; UDP-N-acetyl-alpha-D-glucosamine biosynthesis; UDP-N-acetyl-alpha-D-glucosamine from N-acetyl-alpha-D-glucosamine 1-phosphate: step 1/1. Its pathway is bacterial outer membrane biogenesis; LPS lipid A biosynthesis. Catalyzes the last two sequential reactions in the de novo biosynthetic pathway for UDP-N-acetylglucosamine (UDP-GlcNAc). The C-terminal domain catalyzes the transfer of acetyl group from acetyl coenzyme A to glucosamine-1-phosphate (GlcN-1-P) to produce N-acetylglucosamine-1-phosphate (GlcNAc-1-P), which is converted into UDP-GlcNAc by the transfer of uridine 5-monophosphate (from uridine 5-triphosphate), a reaction catalyzed by the N-terminal domain. In Sphingopyxis alaskensis (strain DSM 13593 / LMG 18877 / RB2256) (Sphingomonas alaskensis), this protein is Bifunctional protein GlmU.